Here is a 424-residue protein sequence, read N- to C-terminus: MKYQKPKGTADILPPFSKEWQFVEQNARETFALYNYEEIRTPIFEKFEVFSRSAGDTSDIVTKEMYDFDDKGGRHIALRPEGTAGVVRAFVENKLYGPEHQKPVKVYYMGPMFRYERPQSGRLREFHQIGVEAFGSDSPKIDVETIMMGMDFLKKLKVSGLKLVINTLGDKESRDRYRQALIDYLEPHFEELSDDSKARLHKNPLRVLDSKDKNDQKIVENAPEILDFLTEDAQKHFTSVKEELDTLGVDYVVDSSMVRGLDYYNHTIFEIMIADSPLGKGDVTICAGGRYNGLVEELGGPEVSGVGFGLGVERLLLLLNAETQTTLQSKQLDFYVVGIGDLVQNDVLKVVHELRQMNFVTEQDYLDRKPKAQFKSADKLNAKYVVTIGESEMNDRIFKLKDMHSGEERTVALSEINTLKDLLK.

This sequence belongs to the class-II aminoacyl-tRNA synthetase family. As to quaternary structure, homodimer.

The protein localises to the cytoplasm. The enzyme catalyses tRNA(His) + L-histidine + ATP = L-histidyl-tRNA(His) + AMP + diphosphate + H(+). The polypeptide is Histidine--tRNA ligase (Pediococcus pentosaceus (strain ATCC 25745 / CCUG 21536 / LMG 10740 / 183-1w)).